The following is a 195-amino-acid chain: Peptidyl-tRNA hydrolase (195 aa).

Position 17 (Tyr17) interacts with tRNA. His22 acts as the Proton acceptor in catalysis. Positions 68, 70, and 116 each coordinate tRNA.

The protein belongs to the PTH family. Monomer.

Its subcellular location is the cytoplasm. The enzyme catalyses an N-acyl-L-alpha-aminoacyl-tRNA + H2O = an N-acyl-L-amino acid + a tRNA + H(+). In terms of biological role, hydrolyzes ribosome-free peptidyl-tRNAs (with 1 or more amino acids incorporated), which drop off the ribosome during protein synthesis, or as a result of ribosome stalling. Its function is as follows. Catalyzes the release of premature peptidyl moieties from peptidyl-tRNA molecules trapped in stalled 50S ribosomal subunits, and thus maintains levels of free tRNAs and 50S ribosomes. This is Peptidyl-tRNA hydrolase from Shewanella putrefaciens (strain CN-32 / ATCC BAA-453).